The primary structure comprises 194 residues: Small ribosomal subunit protein uS11m (194 aa).

Belongs to the universal ribosomal protein uS11 family. In terms of assembly, component of the mitochondrial small ribosomal subunit (mt-SSU). Mature mammalian 55S mitochondrial ribosomes consist of a small (28S) and a large (39S) subunit. The 28S small subunit contains a 12S ribosomal RNA (12S mt-rRNA) and 30 different proteins. The 39S large subunit contains a 16S rRNA (16S mt-rRNA), a copy of mitochondrial valine transfer RNA (mt-tRNA(Val)), which plays an integral structural role, and 52 different proteins.

The protein resides in the mitochondrion. This chain is Small ribosomal subunit protein uS11m (MRPS11), found in Homo sapiens (Human).